We begin with the raw amino-acid sequence, 719 residues long: MSVDKAELCGSLLTWLQTFHVPSPCASPQDLSSGLAVAYVLNQIDPSWFNEAWLQGISEDPGPNWKLKVSNLKMVLRSLVEYSQDVLAHPVSEEHLPDVSLIGEFSDPAELGKLLQLVLGCAISCEKKQDHIQRIMTLEESVQHVVMEAIQELMTKDTPDSLSPETYGNFDSQSRRYYFLSEEAEEGDELQQRCLDLERQLMLLSEEKQSLAQENAGLRERMGRPEGEGTPGLTAKKLLLLQSQLEQLQEENFRLESGREDERLRCAELEREVAELQHRNQALTSLAQEAQALKDEMDELRQSSERAGQLEATLTSCRRRLGELRELRRQVRQLEERNAGHAERTRQLEDELRRAGSLRAQLEAQRRQVQELQGQRQEEAMKAEKWLFECRNLEEKYESVTKEKERLLAERDSLREANEELRCAQLQPRGLTQADPSLDPTSTPVDNLAAEILPAELRETLLRLQLENKRLCRQEAADRERQEELQRHLEDANRARHGLETQHRLNQQQLSELRAQVEDLQKALQEQGGKTEDAISILLKRKLEEHLQKLHEADLELQRKREYIEELEPPTDSSTARRIEELQHNLQKKDADLRAMEERYRRYVDKARMVMQTMEPKQRPAAGAPPELHSLRTQLRERDVRIRHLEMDFEKSRSQREQEEKLLISAWYNMGMALQQRAGEERAPAHAQSFLAQQRLATNSRRGPLGRLASLNLRPTDKH.

Positions 1-161 (MSVDKAELCG…ELMTKDTPDS (161 aa)) are required for localization to the centrosome and induction of aggresome formation. The sufficient for interaction with microtubules stretch occupies residues 1–548 (MSVDKAELCG…LKRKLEEHLQ (548 aa)). Positions 6-122 (AELCGSLLTW…KLLQLVLGCA (117 aa)) constitute a Calponin-homology (CH) domain. Ser-163 is subject to Phosphoserine. Coiled-coil stretches lie at residues 180-427 (LSEE…AQLQ) and 455-607 (AELR…VDKA). Thr-230 carries the post-translational modification Phosphothreonine. Positions 533 to 719 (DAISILLKRK…SLNLRPTDKH (187 aa)) are required for localization to the centrosome and induction of aggresome formation. The interval 584–719 (HNLQKKDADL…SLNLRPTDKH (136 aa)) is sufficient for interaction with CNTRL. The disordered stretch occupies residues 696 to 719 (LATNSRRGPLGRLASLNLRPTDKH). Ser-710 bears the Phosphoserine mark.

This sequence belongs to the hook family. In terms of assembly, self-associates. Component of the FTS/Hook/FHIP complex (FHF complex), composed of AKTIP/FTS, FHIP1B, and one or more members of the Hook family of proteins HOOK1, HOOK2, and HOOK3. May interact directly with AKTIP/FTS, HOOK1 and HOOK3. Associates with several subunits of the homotypic vesicular sorting complex (the HOPS complex) including VPS16 and VPS41; these interactions may be indirect. Interacts with CNTRL. Interacts with microtubules. Interacts with ZC3H14. Interacts with LRGUK (via guanylate kinase-like domain). Interacts with CCDC181. Interacts with AP4M1; the interaction is direct, mediates the interaction between FTS-Hook-FHIP (FHF) complex and AP-4 and the perinuclear distribution of AP-4.

Its subcellular location is the cytoplasm. It is found in the cytoskeleton. The protein resides in the microtubule organizing center. It localises to the centrosome. The protein localises to the golgi apparatus. Its subcellular location is the trans-Golgi network. Its function is as follows. Component of the FTS/Hook/FHIP complex (FHF complex). The FHF complex may function to promote vesicle trafficking and/or fusion via the homotypic vesicular protein sorting complex (the HOPS complex). Contributes to the establishment and maintenance of centrosome function. May function in the positioning or formation of aggresomes, which are pericentriolar accumulations of misfolded proteins, proteasomes and chaperones. FHF complex promotes the distribution of AP-4 complex to the perinuclear area of the cell. The sequence is that of Protein Hook homolog 2 (HOOK2) from Homo sapiens (Human).